The sequence spans 62 residues: Protein YhjR (62 aa).

The chain is Protein YhjR (yhjR) from Escherichia coli (strain K12).